Consider the following 483-residue polypeptide: Macrophage receptor MARCO (483 aa).

The Cytoplasmic portion of the chain corresponds to Met-1–Phe-48. A helical; Signal-anchor for type II membrane protein membrane pass occupies residues Cys-49–Leu-69. Over Lys-70–Arg-483 the chain is Extracellular. N-linked (GlcNAc...) asparagine glycans are attached at residues Asn-85 and Asn-137. Residues Arg-146–Phe-386 form a disordered region. Residues Lys-148–Gly-383 enclose the Collagen-like domain. Positions Ser-153–Lys-166 are enriched in low complexity. The span at Lys-193–Asp-216 shows a compositional bias: basic and acidic residues. Residues Val-273–Lys-286 show a composition bias toward low complexity. Basic and acidic residues predominate over residues Lys-376 to Phe-386. The SRCR domain occupies Val-389–Arg-483. 3 cysteine pairs are disulfide-bonded: Cys-412/Cys-472, Cys-425/Cys-482, and Cys-452/Cys-462.

In terms of assembly, homotrimer; disulfide-linked. Trimers may assemble in larger oligomers thus resulting in the creation of a large surface capable of interacting with very large ligands. Post-translationally, N-glycosylated. Expressed in alveolar macrophages, macrophages of lymph node sinues, and Kupffer cells in liver (at protein level).

Its subcellular location is the cell membrane. Pattern recognition receptor (PRR) which binds Gram-positive and Gram-negative bacteria. Also plays a role in binding of unopsonized particles by alveolar macrophages. Binds to the secretoglobin SCGB3A2. The chain is Macrophage receptor MARCO (MARCO) from Mesocricetus auratus (Golden hamster).